A 177-amino-acid polypeptide reads, in one-letter code: MSSAPNASALMKIGQLKKPYGIKGWLWVFSETDDRTAIFDIKPWWMKTATGMKPLTVKAWRQQGTGVVAQFEQIPDRNVAETMNGVTLWVEQDILPEPAEDEYYWSDLVTLRVINEQDEYLGDITEMFETGAHAIMRVAATSDSLDKEERLIPWHKQTVVKVDLTEKTVLVAWPSDY.

The 78-residue stretch at 100–177 (EDEYYWSDLV…TVLVAWPSDY (78 aa)) folds into the PRC barrel domain.

It belongs to the RimM family. Binds ribosomal protein uS19.

The protein localises to the cytoplasm. An accessory protein needed during the final step in the assembly of 30S ribosomal subunit, possibly for assembly of the head region. Essential for efficient processing of 16S rRNA. May be needed both before and after RbfA during the maturation of 16S rRNA. It has affinity for free ribosomal 30S subunits but not for 70S ribosomes. The chain is Ribosome maturation factor RimM from Psychrobacter arcticus (strain DSM 17307 / VKM B-2377 / 273-4).